We begin with the raw amino-acid sequence, 445 residues long: ATP-dependent rRNA helicase rrp3 (445 aa).

The span at 1–10 shows a compositional bias: basic and acidic residues; that stretch reads MSKNSSRDSS. A disordered region spans residues 1-28; sequence MSKNSSRDSSPEEVSPDTETPSTTTAPK. Residues 17 to 28 are compositionally biased toward low complexity; the sequence is DTETPSTTTAPK. The Q motif motif lies at 28–56; sequence KTFRELGVIDSLCEACEELGYTAPTPIQE. One can recognise a Helicase ATP-binding domain in the interval 59–229; the sequence is IPIALEGRDL…RASLSDPVRV (171 aa). 72-79 is an ATP binding site; it reads AETGSGKT. The short motif at 178-181 is the DEAD box element; that stretch reads DEAD. One can recognise a Helicase C-terminal domain in the interval 240–400; the sequence is KLLQSYLFIP…EYKPEKDEVM (161 aa). Residues 415-445 form a disordered region; the sequence is LTMRDMQDKDNKGRGPRNRKRTRDDLDQDDG.

Belongs to the DEAD box helicase family. DDX47/RRP3 subfamily. In terms of assembly, interacts with the SSU processome.

It is found in the nucleus. The catalysed reaction is ATP + H2O = ADP + phosphate + H(+). In terms of biological role, ATP-dependent rRNA helicase required for pre-ribosomal RNA processing. Involved in the maturation of the 35S-pre-rRNA and to its cleavage to mature 18S rRNA. This Aspergillus terreus (strain NIH 2624 / FGSC A1156) protein is ATP-dependent rRNA helicase rrp3.